Here is a 115-residue protein sequence, read N- to C-terminus: Probable 4-amino-4-deoxy-L-arabinose-phosphoundecaprenol flippase subunit ArnE (115 aa).

4 helical membrane passes run 1–21, 43–63, 65–85, and 93–113; these read MIVGYLLVVLVSLLTCGGQLC, WLALAVLLLGLGMAVWLNVLQ, LPLSLAYPTLSLNFVLVTLAA, and TTARHWYGVASIMLGILLMSI. Residues 44–113 enclose the EamA domain; it reads LALAVLLLGL…IMLGILLMSI (70 aa).

The protein belongs to the ArnE family. In terms of assembly, heterodimer of ArnE and ArnF.

The protein resides in the cell inner membrane. Its pathway is bacterial outer membrane biogenesis; lipopolysaccharide biosynthesis. In terms of biological role, translocates 4-amino-4-deoxy-L-arabinose-phosphoundecaprenol (alpha-L-Ara4N-phosphoundecaprenol) from the cytoplasmic to the periplasmic side of the inner membrane. The protein is Probable 4-amino-4-deoxy-L-arabinose-phosphoundecaprenol flippase subunit ArnE of Serratia proteamaculans (strain 568).